The primary structure comprises 92 residues: MLCAVYKSSRKADTYLFVNKRDCFDDVPQALLDMFGVPQLVMVFPIAKRESLGIADIQKVRAALEEKGFYLQIPPPQVNLLAEHRVSLGIKD.

In terms of domain architecture, YcgL spans 1 to 85 (MLCAVYKSSR…PQVNLLAEHR (85 aa)).

This is YcgL domain-containing protein Shewmr7_2249 from Shewanella sp. (strain MR-7).